The chain runs to 148 residues: Glutaredoxin-C10 (148 aa).

Residues 16–55 form a disordered region; the sequence is TLDLTVHPPPPPPLPPPAPSTVSSSTASTSLSFDEEETSE. Residues 22–34 are compositionally biased toward pro residues; it reads HPPPPPPLPPPAP. A compositionally biased stretch (low complexity) spans 35–47; it reads STVSSSTASTSLS. The Glutaredoxin domain maps to 55-147; sequence ESKIGRLISE…PRLVEVGALW (93 aa). Cysteine 76 and cysteine 79 are joined by a disulfide.

This sequence belongs to the glutaredoxin family. CC-type subfamily.

Its subcellular location is the cytoplasm. Has a glutathione-disulfide oxidoreductase activity in the presence of NADPH and glutathione reductase. Reduces low molecular weight disulfides and proteins. In Arabidopsis thaliana (Mouse-ear cress), this protein is Glutaredoxin-C10 (GRXC10).